The primary structure comprises 428 residues: Dihydroorotase (428 aa).

Positions 59 and 61 each coordinate Zn(2+). Substrate contacts are provided by residues 61–63 and Asn93; that span reads HLR. Asp151, His178, and His231 together coordinate Zn(2+). Asn277 lines the substrate pocket. Residue Asp304 participates in Zn(2+) binding. The active site involves Asp304. Residues His308 and 322 to 323 contribute to the substrate site; that span reads FG.

The protein belongs to the metallo-dependent hydrolases superfamily. DHOase family. Class I DHOase subfamily. Requires Zn(2+) as cofactor.

The catalysed reaction is (S)-dihydroorotate + H2O = N-carbamoyl-L-aspartate + H(+). The protein operates within pyrimidine metabolism; UMP biosynthesis via de novo pathway; (S)-dihydroorotate from bicarbonate: step 3/3. Catalyzes the reversible cyclization of carbamoyl aspartate to dihydroorotate. The polypeptide is Dihydroorotase (Bacillus cereus (strain AH187)).